The primary structure comprises 236 residues: Auxin-responsive protein IAA16 (236 aa).

Residues 9–13 carry the EAR-like (transcriptional repression) motif; it reads LRLGL. The tract at residues 82-110 is disordered; sequence KNVMSGQKPTTGDATEGNDKTSGSSGATS. Residues 85–94 are compositionally biased toward polar residues; sequence MSGQKPTTGD. The 101-residue stretch at 118–218 folds into the PB1 domain; that stretch reads VAYVKVSMDG…SCKRIRIMKG (101 aa).

It belongs to the Aux/IAA family. As to quaternary structure, homodimers and heterodimers.

It localises to the nucleus. In terms of biological role, aux/IAA proteins are short-lived transcriptional factors that function as repressors of early auxin response genes at low auxin concentrations. Repression is thought to result from the interaction with auxin response factors (ARFs), proteins that bind to the auxin-responsive promoter element (AuxRE). Formation of heterodimers with ARF proteins may alter their ability to modulate early auxin response genes expression. The sequence is that of Auxin-responsive protein IAA16 (IAA16) from Arabidopsis thaliana (Mouse-ear cress).